The sequence spans 318 residues: Ubiquinone biosynthesis protein COQ9, mitochondrial (318 aa).

A mitochondrion-targeting transit peptide spans 1–44 (MAAAAVSGALGRAGWRLLQLRCLPVARCRQALVPRAFHASAVGL). The SIFI-degron motif lies at 16 to 31 (RLLQLRCLPVARCRQA). Residues 44-98 (LRSSDEQKQQPPNSFSQQHSETQGAEKPDPESSHSPPRYTDQGGEEEEDYESEEQ) form a disordered region. Over residues 52 to 66 (QQPPNSFSQQHSETQ) the composition is skewed to polar residues. Over residues 86–97 (GGEEEEDYESEE) the composition is skewed to acidic residues. The residue at position 175 (Lys-175) is an N6-acetyllysine. Residue Arg-244 coordinates a 1,2-diacylglycero-3-phosphoethanolamine.

The protein belongs to the COQ9 family. As to quaternary structure, homodimer. Heterodimer; two heterodimers of COQ7:COQ9 come together on the same side of the lipid pseudo-bilayer and form a curved tetramer with a hydrophobic surface suitable for membrane interaction. These two tetramers assemble into a soluble octamer with a pseudo-bilayer of lipids captured within. Interacts with COQ7; this interaction allows ubiquinone (CoQ) isoprene intermediates presentation to COQ7 and facilitates the COQ7-mediated hydroxylase step. Post-translationally, in response to mitochondrial stress, the precursor protein is ubiquitinated by the SIFI complex in the cytoplasm before mitochondrial import, leading to its degradation. Within the SIFI complex, UBR4 initiates ubiquitin chain that are further elongated or branched by KCMF1.

Its subcellular location is the mitochondrion. It functions in the pathway cofactor biosynthesis; ubiquinone biosynthesis. Membrane-associated protein that warps the membrane surface to access and bind aromatic isoprenes with high specificity, including ubiquinone (CoQ) isoprene intermediates and presents them directly to COQ7, therefore facilitating the COQ7-mediated hydroxylase step. Participates in the biosynthesis of coenzyme Q, also named ubiquinone, an essential lipid-soluble electron transporter for aerobic cellular respiration. This Homo sapiens (Human) protein is Ubiquinone biosynthesis protein COQ9, mitochondrial.